A 341-amino-acid chain; its full sequence is L-threonine 3-dehydrogenase (341 aa).

Residue Cys-38 participates in Zn(2+) binding. Residues Thr-40 and His-43 each act as charge relay system in the active site. The Zn(2+) site is built by His-63, Glu-64, Cys-93, Cys-96, Cys-99, and Cys-107. Residues Ile-175, Asp-195, Arg-200, 262–264 (LGI), and 286–287 (IY) contribute to the NAD(+) site.

It belongs to the zinc-containing alcohol dehydrogenase family. Homotetramer. Requires Zn(2+) as cofactor.

Its subcellular location is the cytoplasm. The catalysed reaction is L-threonine + NAD(+) = (2S)-2-amino-3-oxobutanoate + NADH + H(+). The protein operates within amino-acid degradation; L-threonine degradation via oxydo-reductase pathway; glycine from L-threonine: step 1/2. Catalyzes the NAD(+)-dependent oxidation of L-threonine to 2-amino-3-ketobutyrate. The chain is L-threonine 3-dehydrogenase from Escherichia coli O157:H7.